A 1331-amino-acid chain; its full sequence is Xanthine dehydrogenase/oxidase (1331 aa).

The 2Fe-2S ferredoxin-type domain occupies 4-91; the sequence is DELVFFVNGK…HVAVTTVEGI (88 aa). [2Fe-2S] cluster contacts are provided by Cys43, Cys48, Cys51, Cys73, Cys112, Cys115, Cys147, and Cys149. Residues 228–413 enclose the FAD-binding PCMH-type domain; the sequence is FEGERVTWIQ…LSIEIPYSKE (186 aa). FAD-binding positions include 256–263, Phe336, 346–350, Asp359, Leu403, and Lys421; these read LVVGNTEI and SIGGN. A disulfide bridge links Cys535 with Cys992. Residues Gln767 and Phe798 each contribute to the Mo-molybdopterin site. Substrate-binding residues include Glu802 and Arg880. A Mo-molybdopterin-binding site is contributed by Arg912. Substrate-binding residues include Phe914 and Thr1010. Ala1079 lines the Mo-molybdopterin pocket. Residue Glu1261 is the Proton acceptor of the active site.

Belongs to the xanthine dehydrogenase family. Homodimer. Interacts with BTN1A1. The cofactor is [2Fe-2S] cluster. Requires FAD as cofactor. Mo-molybdopterin serves as cofactor. In terms of processing, subject to partial proteolysis; this alters the enzyme from the dehydrogenase form (D) to the oxidase form (O). Post-translationally, contains sulfhydryl groups that are easily oxidized (in vitro); this alters the enzyme from the dehydrogenase form (D) to the oxidase form (O).

It is found in the peroxisome. Its subcellular location is the cytoplasm. It localises to the secreted. It catalyses the reaction xanthine + NAD(+) + H2O = urate + NADH + H(+). The catalysed reaction is hypoxanthine + NAD(+) + H2O = xanthine + NADH + H(+). The enzyme catalyses xanthine + O2 + H2O = urate + H2O2. Its activity is regulated as follows. Can be converted from the dehydrogenase form (D) to the oxidase form (O) irreversibly by proteolysis or reversibly through the oxidation of sulfhydryl groups. In terms of biological role, key enzyme in purine degradation. Catalyzes the oxidation of hypoxanthine to xanthine. Catalyzes the oxidation of xanthine to uric acid. Contributes to the generation of reactive oxygen species. This chain is Xanthine dehydrogenase/oxidase (Xdh), found in Rattus norvegicus (Rat).